Consider the following 383-residue polypeptide: Galactokinase (383 aa).

Residue 34 to 37 (EHTD) participates in substrate binding. Position 124-130 (124-130 (GAGLSSS)) interacts with ATP. The Mg(2+) site is built by Ser-130 and Glu-162. The Proton acceptor role is filled by Asp-174. Position 223 (Tyr-223) interacts with substrate.

It belongs to the GHMP kinase family. GalK subfamily.

It is found in the cytoplasm. It catalyses the reaction alpha-D-galactose + ATP = alpha-D-galactose 1-phosphate + ADP + H(+). It participates in carbohydrate metabolism; galactose metabolism. Functionally, catalyzes the transfer of the gamma-phosphate of ATP to D-galactose to form alpha-D-galactose-1-phosphate (Gal-1-P). The protein is Galactokinase of Yersinia pseudotuberculosis serotype O:1b (strain IP 31758).